Reading from the N-terminus, the 347-residue chain is Cytosolic sulfotransferase 14 (347 aa).

Lys87–Trp92 serves as a coordination point for 3'-phosphoadenylyl sulfate. Catalysis depends on His155, which acts as the Proton acceptor. Residues Arg177, Ser185, Tyr244, and Arg310 to Gly312 contribute to the 3'-phosphoadenylyl sulfate site.

This sequence belongs to the sulfotransferase 1 family.

The protein resides in the cytoplasm. Its function is as follows. Sulfotransferase that utilizes 3'-phospho-5'-adenylyl sulfate (PAPS) as sulfonate donor. Not active with 11-hydroxyjasmonate or 12-hydroxyjasmonate. The sequence is that of Cytosolic sulfotransferase 14 (SOT14) from Arabidopsis thaliana (Mouse-ear cress).